The primary structure comprises 571 residues: Sulfite reductase [NADPH] hemoprotein beta-component (571 aa).

[4Fe-4S] cluster contacts are provided by cysteine 436, cysteine 442, cysteine 481, and cysteine 485. Cysteine 485 lines the siroheme pocket.

The protein belongs to the nitrite and sulfite reductase 4Fe-4S domain family. As to quaternary structure, alpha(8)-beta(8). The alpha component is a flavoprotein, the beta component is a hemoprotein. The cofactor is siroheme. [4Fe-4S] cluster is required as a cofactor.

The catalysed reaction is hydrogen sulfide + 3 NADP(+) + 3 H2O = sulfite + 3 NADPH + 4 H(+). It participates in sulfur metabolism; hydrogen sulfide biosynthesis; hydrogen sulfide from sulfite (NADPH route): step 1/1. Component of the sulfite reductase complex that catalyzes the 6-electron reduction of sulfite to sulfide. This is one of several activities required for the biosynthesis of L-cysteine from sulfate. This Bacillus velezensis (strain DSM 23117 / BGSC 10A6 / LMG 26770 / FZB42) (Bacillus amyloliquefaciens subsp. plantarum) protein is Sulfite reductase [NADPH] hemoprotein beta-component.